The primary structure comprises 236 residues: T-cell surface glycoprotein CD8 alpha chain (236 aa).

An N-terminal signal peptide occupies residues 1 to 26 (MASRVICFLSLNLLLLDVITRLQVSG). In terms of domain architecture, Ig-like V-type spans 27 to 130 (QLQLSPKKVD…ITSNSVMYFS (104 aa)). At 27–189 (QLQLSPKKVD…MGLGFACDIY (163 aa)) the chain is on the extracellular side. Residues cysteine 47 and cysteine 119 are joined by a disulfide bond. Asparagine 63 is a glycosylation site (N-linked (GlcNAc...) asparagine). Residue threonine 144 is glycosylated (O-linked (GalNAc...) threonine; partial). Residues threonine 148, threonine 152, threonine 158, and threonine 160 are each glycosylated (O-linked (GalNAc...) threonine). Positions 150–170 (APTPVPPPTGTPRPLRPEACR) are disordered. The chain crosses the membrane as a helical span at residues 190–210 (IWAPLAGICAVLLLSLVITLI). Residue cysteine 211 is the site of S-palmitoyl cysteine attachment. The Cytoplasmic segment spans residues 211-236 (CCHRNRRRVCKCPRPLVKPRPSEKFV).

In terms of assembly, forms disulfide-linked heterodimers with CD8B at the cell surface. Also forms homodimers in several cell types including NK-cells or peripheral blood T-lymphocytes. Interacts with the MHC class I HLA-A/B2M dimer. Interacts with LCK in a zinc-dependent manner. Palmitoylated, but association with CD8B seems to be more important for the enrichment of CD8A in lipid rafts. Post-translationally, O-glycosylated. In terms of processing, phosphorylated in cytotoxic T-lymphocytes (CTLs) following activation.

Its subcellular location is the cell membrane. Its function is as follows. Integral membrane glycoprotein that plays an essential role in the immune response and serves multiple functions in responses against both external and internal offenses. In T-cells, functions primarily as a coreceptor for MHC class I molecule:peptide complex. The antigens presented by class I peptides are derived from cytosolic proteins while class II derived from extracellular proteins. Interacts simultaneously with the T-cell receptor (TCR) and the MHC class I proteins presented by antigen presenting cells (APCs). In turn, recruits the Src kinase LCK to the vicinity of the TCR-CD3 complex. LCK then initiates different intracellular signaling pathways by phosphorylating various substrates ultimately leading to lymphokine production, motility, adhesion and activation of cytotoxic T-lymphocytes (CTLs). This mechanism enables CTLs to recognize and eliminate infected cells and tumor cells. In NK-cells, the presence of CD8A homodimers at the cell surface provides a survival mechanism allowing conjugation and lysis of multiple target cells. CD8A homodimer molecules also promote the survival and differentiation of activated lymphocytes into memory CD8 T-cells. This is T-cell surface glycoprotein CD8 alpha chain (Cd8a) from Rattus norvegicus (Rat).